A 339-amino-acid polypeptide reads, in one-letter code: Serine/threonine-protein kinase SAPK2 (339 aa).

One can recognise a Protein kinase domain in the interval 4–260 (YEVIKDIGSG…IPEIKNHPWF (257 aa)). Residues 10–18 (IGSGNFGVA) and Lys33 contribute to the ATP site. Catalysis depends on Asp123, which acts as the Proton acceptor. Positions 253-339 (EIKNHPWFLK…EDSGDFVCAL (87 aa)) are C-terminal.

This sequence belongs to the protein kinase superfamily. Ser/Thr protein kinase family. As to quaternary structure, interacts with BZIP46. Interacts with ABI5 and PP2C30. Interacts with PP2C51. Post-translationally, phosphorylated. Expressed in leaf blades, leaf sheaths and roots. Expressed in shoots and roots of young seedlings.

The protein resides in the cytoplasm. It localises to the nucleus. It catalyses the reaction L-seryl-[protein] + ATP = O-phospho-L-seryl-[protein] + ADP + H(+). The catalysed reaction is L-threonyl-[protein] + ATP = O-phospho-L-threonyl-[protein] + ADP + H(+). Its activity is regulated as follows. Activated by phosphorylation in response to hyperosmotic stress within 5 minutes. Its function is as follows. May play a role in signal transduction of hyperosmotic response. Can phosphorylate BZIP46 in vitro. Together with ABI5, PP2C30 and PYL5, is part of an abscisic acid (ABA) signaling unit that modulates seed germination and early seedling growth. In Oryza sativa subsp. japonica (Rice), this protein is Serine/threonine-protein kinase SAPK2 (SAPK2).